The sequence spans 159 residues: Deoxyuridine 5'-triphosphate nucleotidohydrolase (159 aa).

Residues S79, G92, D95, Y98, K103, R148, F153, and G154 each contribute to the dUMP site.

It belongs to the dUTPase family. In terms of assembly, homotrimer. The cofactor is Mg(2+).

It catalyses the reaction dUTP + H2O = dUMP + diphosphate + H(+). It functions in the pathway pyrimidine metabolism; dUMP biosynthesis; dUMP from dCTP (dUTP route): step 2/2. Involved in nucleotide metabolism via production of dUMP, the immediate precursor of thymidine nucleotides, and decreases the intracellular concentration of dUTP so that uracil cannot be incorporated into DNA. The protein is Deoxyuridine 5'-triphosphate nucleotidohydrolase (DUT1) of Candida albicans (strain SC5314 / ATCC MYA-2876) (Yeast).